The primary structure comprises 418 residues: Delta(14)-sterol reductase TM7SF2 (418 aa).

6 helical membrane passes run 13 to 35, 62 to 81, 102 to 124, 129 to 148, 255 to 277, and 287 to 304; these read FGGPLGAAALLLLLPATMFHLLL, ALLLWLAWLGLQAALYLLPA, GFQALVLTALLVGLGMSAGLPLG, MLLPLAFVATLTAFIFSLFL, FGFMLAFGDMAWVPFTYSLQAQF, and LPMASVICLINATGYYIF. Residues Lys311, Arg315, Leu338, Trp343, and 350-351 contribute to the NADP(+) site; that span reads NY. The chain crosses the membrane as a helical span at residues 355–377; that stretch reads LIMALAWSLPCGVSHLLPYFYLL. NADP(+)-binding positions include Asp390, 394-398, and Tyr405; that span reads CLQKY.

The protein belongs to the ERG4/ERG24 family. As to expression, expressed in adult heart, brain, pancreas, lung, liver, skeletal muscle, kidney, ovary, prostate, testis and adrenal gland, but not detected in placenta, spleen, thymus, small intestine, colon (mucosal lining), or peripheral blood leukocytes.

The protein localises to the microsome membrane. The protein resides in the endoplasmic reticulum membrane. The enzyme catalyses 4,4-dimethyl-5alpha-cholesta-8,24-dien-3beta-ol + NADP(+) = 4,4-dimethyl-5alpha-cholesta-8,14,24-trien-3beta-ol + NADPH + H(+). The catalysed reaction is 5alpha-cholest-8,14-dien-3beta-ol + NADPH + H(+) = 5alpha-cholest-8-en-3beta-ol + NADP(+). It carries out the reaction 4,4-dimethyl-8,14-cholestadien-3beta-ol + NADPH + H(+) = 4,4-dimethyl-5alpha-cholest-8-en-3beta-ol + NADP(+). The protein operates within steroid biosynthesis; cholesterol biosynthesis. In terms of biological role, catalyzes the reduction of the C14-unsaturated bond of lanosterol, as part of the metabolic pathway leading to cholesterol biosynthesis. The protein is Delta(14)-sterol reductase TM7SF2 (TM7SF2) of Homo sapiens (Human).